The primary structure comprises 613 residues: Zinc metalloproteinase-disintegrin-like VMP-III (613 aa).

The N-terminal stretch at 1 to 20 (MIQVLLVTLCLAAFPYQGSS) is a signal peptide. Residues 21 to 190 (IILDSGNVND…KKASQLVVTP (170 aa)) constitute a propeptide that is removed on maturation. The 197-residue stretch at 200 to 396 (KYIELVIVAD…NRPPCILNKP (197 aa)) folds into the Peptidase M12B domain. Position 203 (glutamate 203) interacts with Ca(2+). An N-linked (GlcNAc...) asparagine glycan is attached at asparagine 219. Ca(2+) is bound at residue aspartate 287. Disulfide bonds link cysteine 311/cysteine 391, cysteine 351/cysteine 375, and cysteine 353/cysteine 358. Histidine 336 contacts Zn(2+). Residue glutamate 337 is part of the active site. Histidine 340 and histidine 346 together coordinate Zn(2+). The Ca(2+) site is built by cysteine 391, asparagine 394, valine 406, asparagine 409, phenylalanine 411, glutamate 413, glutamate 416, and aspartate 419. The Disintegrin domain maps to 404–490 (PPVCGNYFVE…ECPTDDFQRN (87 aa)). 14 disulfide bridges follow: cysteine 407/cysteine 436, cysteine 418/cysteine 431, cysteine 420/cysteine 426, cysteine 430/cysteine 453, cysteine 444/cysteine 450, cysteine 449/cysteine 475, cysteine 462/cysteine 482, cysteine 469/cysteine 501, cysteine 494/cysteine 506, cysteine 513/cysteine 563, cysteine 528/cysteine 574, cysteine 541/cysteine 551, cysteine 558/cysteine 600, and cysteine 594/cysteine 606. Residues 468–470 (ECD) carry the D/ECD-tripeptide motif. The N-linked (GlcNAc...) asparagine glycan is linked to asparagine 503.

This sequence belongs to the venom metalloproteinase (M12B) family. P-III subfamily. P-IIIa sub-subfamily. As to quaternary structure, monomer. Requires Zn(2+) as cofactor. As to expression, expressed by the venom gland.

It localises to the secreted. In terms of biological role, snake venom metalloproteinase that impairs hemostasis in the envenomed animal. This is Zinc metalloproteinase-disintegrin-like VMP-III from Agkistrodon piscivorus leucostoma (Western cottonmouth).